The chain runs to 473 residues: ATP synthase subunit beta (473 aa).

Position 158-165 (158-165 (GGAGVGKT)) interacts with ATP.

This sequence belongs to the ATPase alpha/beta chains family. In terms of assembly, F-type ATPases have 2 components, CF(1) - the catalytic core - and CF(0) - the membrane proton channel. CF(1) has five subunits: alpha(3), beta(3), gamma(1), delta(1), epsilon(1). CF(0) has three main subunits: a(1), b(2) and c(9-12). The alpha and beta chains form an alternating ring which encloses part of the gamma chain. CF(1) is attached to CF(0) by a central stalk formed by the gamma and epsilon chains, while a peripheral stalk is formed by the delta and b chains.

The protein resides in the cell membrane. It catalyses the reaction ATP + H2O + 4 H(+)(in) = ADP + phosphate + 5 H(+)(out). Its function is as follows. Produces ATP from ADP in the presence of a proton gradient across the membrane. The catalytic sites are hosted primarily by the beta subunits. The chain is ATP synthase subunit beta from Geobacillus stearothermophilus (Bacillus stearothermophilus).